A 169-amino-acid chain; its full sequence is Unfolded protein response-inducible protein 1 (169 aa).

Functionally, involved in the unfolded protein response (UPR), a transcriptional response which up-regulates genes that enable cells to cope with misfolded, endoplasmic reticulum-retained proteins. UPR is part of the endoplasmic reticulum quality control (ERQC) which prevents the exit of misfolded secretory and membrane proteins from the endoplasmic reticulum. This is Unfolded protein response-inducible protein 1 (ULI1) from Saccharomyces cerevisiae (strain ATCC 204508 / S288c) (Baker's yeast).